Here is a 362-residue protein sequence, read N- to C-terminus: MAPMGIRLSPLGVAVFCLLGLGVLYHLYSGFLAGRFSLFGLGGEPGGGAAGPAGPAASADGGTVDLREMLAVSVLAAVRGGEEVRRVRESNVLHEKSKGKTREGADDKMTSGDVLSNRKMFYLLKTAFPSVQINTEEHVDASDQEVILWDRKIPEDILKEIATPQEVPAESVTVWIDPLDATQEYTEDLRKYVTTMVCVAVNGKPVLGVIHKPFSEYTAWAMVDGGSNVKARTSYNEKTPRIVVSRSHSGMVKQVALQTFGNQTTIIPAGGAGYKVLALLDVPDKSQEKADLYIHVTYIKKWDICAGNAILKALGGHMTTLSGEEISYTGSDGIEGGLLASIRMNHQALVRKLPDLEKTGHK.

M1 carries the N-acetylmethionine modification. Residues 1-12 are Cytoplasmic-facing; that stretch reads MAPMGIRLSPLG. The helical transmembrane segment at 13 to 33 threads the bilayer; it reads VAVFCLLGLGVLYHLYSGFLA. Residues 34 to 362 are Lumenal-facing; sequence GRFSLFGLGG…LPDLEKTGHK (329 aa). The disordered stretch occupies residues 88–109; the sequence is RESNVLHEKSKGKTREGADDKM. The active-site Proton acceptor is D113. Mg(2+) is bound by residues E136, D177, L179, and D180. T182 acts as the Proton acceptor in catalysis. 2 residues coordinate AMP: S245 and H248. Residue N262 is glycosylated (N-linked (GlcNAc...) asparagine). AMP-binding residues include G271 and K275. Position 303 (D303) interacts with Mg(2+).

The protein belongs to the inositol monophosphatase superfamily. Requires Mg(2+) as cofactor. Contains N-linked glycan resistant to endoglycosydase H.

It is found in the golgi apparatus. The protein localises to the trans-Golgi network membrane. The enzyme catalyses adenosine 3',5'-bisphosphate + H2O = AMP + phosphate. Its pathway is sulfur metabolism. Strongly inhibited by lithium. Its function is as follows. Exhibits 3'-nucleotidase activity toward adenosine 3',5'-bisphosphate (PAP), namely hydrolyzes adenosine 3',5'-bisphosphate into adenosine 5'-monophosphate (AMP) and a phosphate. May play a role in the formation of skeletal elements derived through endochondral ossification, possibly by clearing adenosine 3',5'-bisphosphate produced by Golgi sulfotransferases during glycosaminoglycan sulfation. Has no activity toward 3'-phosphoadenosine 5'-phosphosulfate (PAPS) or inositol phosphate (IP) substrates including I(1)P, I(1,4)P2, I(1,3,4)P3, I(1,4,5)P3 and I(1,3,4,5)P4. This chain is Golgi-resident adenosine 3',5'-bisphosphate 3'-phosphatase (BPNT2), found in Bos taurus (Bovine).